Consider the following 350-residue polypeptide: UDP-3-O-acylglucosamine N-acyltransferase (350 aa).

Catalysis depends on H257, which acts as the Proton acceptor.

It belongs to the transferase hexapeptide repeat family. LpxD subfamily. As to quaternary structure, homotrimer.

It carries out the reaction a UDP-3-O-[(3R)-3-hydroxyacyl]-alpha-D-glucosamine + a (3R)-hydroxyacyl-[ACP] = a UDP-2-N,3-O-bis[(3R)-3-hydroxyacyl]-alpha-D-glucosamine + holo-[ACP] + H(+). The protein operates within bacterial outer membrane biogenesis; LPS lipid A biosynthesis. In terms of biological role, catalyzes the N-acylation of UDP-3-O-acylglucosamine using 3-hydroxyacyl-ACP as the acyl donor. Is involved in the biosynthesis of lipid A, a phosphorylated glycolipid that anchors the lipopolysaccharide to the outer membrane of the cell. This is UDP-3-O-acylglucosamine N-acyltransferase from Chelativorans sp. (strain BNC1).